Reading from the N-terminus, the 108-residue chain is Urease subunit beta (108 aa).

Belongs to the urease beta subunit family. In terms of assembly, heterotrimer of UreA (gamma), UreB (beta) and UreC (alpha) subunits. Three heterotrimers associate to form the active enzyme.

It is found in the cytoplasm. It carries out the reaction urea + 2 H2O + H(+) = hydrogencarbonate + 2 NH4(+). It functions in the pathway nitrogen metabolism; urea degradation; CO(2) and NH(3) from urea (urease route): step 1/1. The sequence is that of Urease subunit beta from Nocardia farcinica (strain IFM 10152).